We begin with the raw amino-acid sequence, 295 residues long: Structure-specific endonuclease subunit SLX1 (295 aa).

One can recognise a GIY-YIG domain in the interval 11-93 (EFYGVYILQS…QHPKTSRHMA (83 aa)). The disordered stretch occupies residues 85–133 (HPKTSRHMAGGGGSVTATAETAKSAPVAGKSDATSPAKNRRNAAPVARS). Residues 205–272 (CCLCSDAIDY…IPSDVSCSQC (68 aa)) form an SLX1-type zinc finger.

It belongs to the SLX1 family. As to quaternary structure, forms a heterodimer with SLX4. Requires a divalent metal cation as cofactor.

It is found in the nucleus. In terms of biological role, catalytic subunit of the SLX1-SLX4 structure-specific endonuclease that resolves DNA secondary structures generated during DNA repair and recombination. Has endonuclease activity towards branched DNA substrates, introducing single-strand cuts in duplex DNA close to junctions with ss-DNA. In Meyerozyma guilliermondii (strain ATCC 6260 / CBS 566 / DSM 6381 / JCM 1539 / NBRC 10279 / NRRL Y-324) (Yeast), this protein is Structure-specific endonuclease subunit SLX1.